Reading from the N-terminus, the 201-residue chain is Potassium-transporting ATPase KdpC subunit (201 aa).

A helical transmembrane segment spans residues P7 to G29.

Belongs to the KdpC family. As to quaternary structure, the system is composed of three essential subunits: KdpA, KdpB and KdpC.

The protein resides in the cell inner membrane. Part of the high-affinity ATP-driven potassium transport (or Kdp) system, which catalyzes the hydrolysis of ATP coupled with the electrogenic transport of potassium into the cytoplasm. This subunit acts as a catalytic chaperone that increases the ATP-binding affinity of the ATP-hydrolyzing subunit KdpB by the formation of a transient KdpB/KdpC/ATP ternary complex. This is Potassium-transporting ATPase KdpC subunit from Methylobacterium radiotolerans (strain ATCC 27329 / DSM 1819 / JCM 2831 / NBRC 15690 / NCIMB 10815 / 0-1).